We begin with the raw amino-acid sequence, 157 residues long: RxLR effector protein PITG_04049 (157 aa).

Residues 1 to 23 (MRLIAGVLAGFLVICEVTSTSES) form the signal peptide. The RxLR-dEER motif lies at 51–65 (QFLRTDVVMNRGEER).

This sequence belongs to the RxLR effector family.

It is found in the secreted. The protein resides in the host cytoplasm. Its subcellular location is the host nucleus. Functionally, effector that might be involved in host plant infection. In Phytophthora infestans (strain T30-4) (Potato late blight agent), this protein is RxLR effector protein PITG_04049.